The primary structure comprises 317 residues: MQLQTQSFALNLLPSPNFAKPIERREFISLKRDPSRPISLRCSVSTTLDTPATASTHKPFPAEVSRSIMELSSVGTLSTLTHDGWPLGVGVRFAVDKDGTPVLCLNRSVSPDKRSALHVQLEQCGLRTPQCTIQGSIGRPGDDTVLKRLSATWREKFGEEVKEDSLYVVAVDRVLQMEDFMEDGIWVASSDYKNASPDPLRDIAEDIVNQINANNMEDIFRFCNVYVDLDFVVSETKMIWMDRLGFDLRVWSPRGVYDVRIPFPMEVTDEKGAKSSFNGMSQLAWEVEKSYCPADFNKVKLLKQVVGSSHSHKGGGQ.

Residues 1-42 (MQLQTQSFALNLLPSPNFAKPIERREFISLKRDPSRPISLRC) constitute a chloroplast transit peptide.

In terms of assembly, interacts with HEMA1 and forms a heterotetramer of two GLUTRBP and two HEMA1 subunits.

The protein localises to the plastid. It is found in the chloroplast stroma. Involved in the regulation of glutamyl-tRNA reductase (GluTR) which is important for the synthesis and distribution of 5-aminolevulinate, a precursor in heme and chlorophyll biosynthesis. Stimulates GluTR activity and regulates glutamate-1-semialdehyde release. May play a role in heme metabolism. Necessary for efficient photosynthetic electron transport in chloroplasts. The polypeptide is Glutamyl-tRNA reductase-binding protein, chloroplastic (Arabidopsis thaliana (Mouse-ear cress)).